The chain runs to 116 residues: NADH-ubiquinone oxidoreductase chain 3 (116 aa).

Helical transmembrane passes span 4 to 24, 56 to 76, and 88 to 108; these read IIFL…AAHA, FFLV…LFPL, and LIPI…FEWI.

This sequence belongs to the complex I subunit 3 family.

It localises to the mitochondrion membrane. The enzyme catalyses a ubiquinone + NADH + 5 H(+)(in) = a ubiquinol + NAD(+) + 4 H(+)(out). Its function is as follows. Core subunit of the mitochondrial membrane respiratory chain NADH dehydrogenase (Complex I) that is believed to belong to the minimal assembly required for catalysis. Complex I functions in the transfer of electrons from NADH to the respiratory chain. The immediate electron acceptor for the enzyme is believed to be ubiquinone. This Strongylocentrotus purpuratus (Purple sea urchin) protein is NADH-ubiquinone oxidoreductase chain 3 (ND3).